A 269-amino-acid polypeptide reads, in one-letter code: Phosphonoacetaldehyde hydrolase (269 aa).

Catalysis depends on D10, which acts as the Nucleophile. Positions 10 and 12 each coordinate Mg(2+). Residue K52 is the Schiff-base intermediate with substrate of the active site. A Mg(2+)-binding site is contributed by D186.

It belongs to the HAD-like hydrolase superfamily. PhnX family. In terms of assembly, homodimer. Requires Mg(2+) as cofactor.

The catalysed reaction is phosphonoacetaldehyde + H2O = acetaldehyde + phosphate + H(+). Involved in phosphonate degradation. In Salmonella heidelberg (strain SL476), this protein is Phosphonoacetaldehyde hydrolase.